The following is a 161-amino-acid chain: MKYDTSELCDIYQEDVNVVEPLFSNFGGRASFGGQIITVKCFEDNGLLYDLLEQNGRGRVLVVDGGGSVRRALVDAELARLAVQNEWEGLVIYGAVHQVDDLEELDIGIQAMAAIPVGAAGEGIGESDVRVNFGGVTFFSGDHLYADNTGIILSEDPLDIE.

This sequence belongs to the RraA family. In terms of assembly, homotrimer. Binds to both RNA-binding sites in the C-terminal region of Rne and to RhlB.

It localises to the cytoplasm. Functionally, globally modulates RNA abundance by binding to RNase E (Rne) and regulating its endonucleolytic activity. Can modulate Rne action in a substrate-dependent manner by altering the composition of the degradosome. Modulates RNA-binding and helicase activities of the degradosome. In Shigella dysenteriae serotype 1 (strain Sd197), this protein is Regulator of ribonuclease activity A.